The chain runs to 486 residues: UDP-N-acetylmuramate--L-alanine ligase (486 aa).

An ATP-binding site is contributed by 129 to 135 (GTHGKTT).

This sequence belongs to the MurCDEF family.

It is found in the cytoplasm. The catalysed reaction is UDP-N-acetyl-alpha-D-muramate + L-alanine + ATP = UDP-N-acetyl-alpha-D-muramoyl-L-alanine + ADP + phosphate + H(+). The protein operates within cell wall biogenesis; peptidoglycan biosynthesis. Functionally, cell wall formation. This is UDP-N-acetylmuramate--L-alanine ligase from Vibrio cholerae serotype O1 (strain ATCC 39541 / Classical Ogawa 395 / O395).